Here is a 659-residue protein sequence, read N- to C-terminus: MDDERRVLCPENRGLAAYVLQKKQEYAEKPKGLSENLERTFVKGYRSVCDAKDPINTLKDLSQIKGFGKWMVKLMKGYFDTAVESSEQEDLPDNRAGKKANGKKRYIPQRNSVGYALLITLHRRTTNGKEFMRKQELIDAADANGLSHAPVGPEKGKGKAGLGHSKREWYSGWSCMTTLIQKGLVVKSSNPAKYMLTVEGREVANECILRSGLPDSVDILSVDEMDPTPQAKKTPNQNPTCSFTMREELPYVDPRCRAQSAIPSDILEKFTPFGYSKEQVVAAFREVSDGSGDKDPSTLWLSVMCHLRQAEVYNSCPDSRNSKKDSSGPFKSQIRQVDLEGSRAKKFRSCNDGSTLNPCSSGSSHAVKACSSSLASDGTKGITNIPRLPPLQFGETFEEAYDVILILDDREKFATKGSRSRNIVENICSEFNIKIEVRRLPVGDCIWIARHKYLETEYVLDFIAERKNVDDMRSSIRDNRYRDQKLRLQRSGFKKLIYILEGDPNHSDAAESIKTACFTTEILEGFDVLRTHGLGETLRKYGYLTKSIYQYYKLRVNDNDQSKGAASCPSFDSFVKRCQDLDKMTISDVFAIQLMQVPQVTEEIAIAVLDMYPTLLSLASAYSHLEADVSAQEEMLRNRSNNVICASASKNIFKLVWGE.

The short motif at 59–78 (KDLSQIKGFGKWMVKLMKGY) is the Helix-hairpin-helix motif 1 element. Positions 404 to 503 (ILILDDREKF…KKLIYILEGD (100 aa)) constitute an ERCC4 domain. A Helix-hairpin-helix motif 2 motif is present at residues 585 to 622 (TISDVFAIQLMQVPQVTEEIAIAVLDMYPTLLSLASAY).

It belongs to the XPF family. In terms of assembly, forms a heterodimer with EME1A or EME1B. Mg(2+) serves as cofactor. It depends on Ca(2+) as a cofactor. Ubiquitous but preferentially expressed in young flowers buds, notably in anthers.

The protein localises to the nucleus. The protein resides in the nucleolus. Functionally, interacts with EME1 to form a DNA structure-specific endonuclease with substrate preference for branched DNA structures with a 5'-end at the branch nick. Typical substrates include 3'-flap structures, D-loops, replication forks, nicked Holliday junctions and also intact Holliday junctions with a reduced efficiency. May be required in mitosis for the processing of stalled or collapsed replication fork intermediates. Plays a role in DNA repair and in genotoxic stress-induced homologous recombination (HR) in somatic cells. Mediates a subset of meiotic recombination events that are insensitive to crossover interference. Together with SEND1, essential for the resolution of toxic replication structures to ensure genome stability, and to maintain telomere integrity and replication. In Arabidopsis thaliana (Mouse-ear cress), this protein is Crossover junction endonuclease MUS81.